A 509-amino-acid polypeptide reads, in one-letter code: ATP synthase subunit alpha (509 aa).

169–176 serves as a coordination point for ATP; it reads GDRQTGKT.

It belongs to the ATPase alpha/beta chains family. F-type ATPases have 2 components, CF(1) - the catalytic core - and CF(0) - the membrane proton channel. CF(1) has five subunits: alpha(3), beta(3), gamma(1), delta(1), epsilon(1). CF(0) has three main subunits: a(1), b(2) and c(9-12). The alpha and beta chains form an alternating ring which encloses part of the gamma chain. CF(1) is attached to CF(0) by a central stalk formed by the gamma and epsilon chains, while a peripheral stalk is formed by the delta and b chains.

The protein localises to the cell inner membrane. The enzyme catalyses ATP + H2O + 4 H(+)(in) = ADP + phosphate + 5 H(+)(out). Functionally, produces ATP from ADP in the presence of a proton gradient across the membrane. The alpha chain is a regulatory subunit. The protein is ATP synthase subunit alpha of Rhizobium etli (strain ATCC 51251 / DSM 11541 / JCM 21823 / NBRC 15573 / CFN 42).